Reading from the N-terminus, the 334-residue chain is Glutaredoxin-3 (334 aa).

The residue at position 2 (Ala-2) is an N-acetylalanine. The Thioredoxin domain maps to 2-116 (AGGAAEAAAA…LTKKVQRHAS (115 aa)). The tract at residues 110 to 131 (KVQRHASSGSFSPSGSEHPKED) is disordered. Ser-116 and Ser-119 each carry phosphoserine. Over residues 116–125 (SSGSFSPSGS) the composition is skewed to low complexity. Glutaredoxin domains follow at residues 145–235 (CMLF…PKLE) and 236–334 (ERLK…KGEN). Residues Cys-158 and Cys-260 each coordinate [2Fe-2S] cluster.

In terms of assembly, homodimer; the homodimer is independent of 2Fe-2S clusters. Heterotrimer; forms a heterotrimeric complex composed by two BOLA2 molecules and one GLRX3 molecule; linked by [2Fe-2S] clusters. Interacts (via N-terminus) with PRKCQ/PKC-theta. Interacts (via C-terminus) with CSRP3. Interacts with CSRP2.

It localises to the cytoplasm. The protein resides in the cytosol. Its subcellular location is the cell cortex. It is found in the myofibril. The protein localises to the sarcomere. It localises to the z line. In terms of biological role, together with BOLA2, acts as a cytosolic iron-sulfur (Fe-S) cluster assembly factor that facilitates [2Fe-2S] cluster insertion into a subset of cytosolic proteins. Acts as a critical negative regulator of cardiac hypertrophy and a positive inotropic regulator. Required for hemoglobin maturation. Does not possess any thyoredoxin activity since it lacks the conserved motif that is essential for catalytic activity. The sequence is that of Glutaredoxin-3 (GLRX3) from Bos taurus (Bovine).